We begin with the raw amino-acid sequence, 237 residues long: MSKTTPDRPRRNFYGRIKGKTLKPNQRTYLDEDLTPLAPGPVSWQDNPTRQPLDLNALFGGRETWLEIGFGGGEHLVHQAASNPGIGIIGAEPYINGVAMLLGKIRAAGGDNVRVHPGDVRDLFDVLPAQSISRAFLLYPDPWPKKRHHRRRFVTPEHLEPLARVLKPGAIFRVATDIPDYVRQTLEEVPRAGFEWLAERPADWRQPWGDWISTRYEQKALREGRVPHYLTFRRLEG.

S-adenosyl-L-methionine is bound by residues E67, E92, D119, and D141. Residue D141 is part of the active site. Residues K145, D177, and 214–217 (TRYE) contribute to the substrate site.

It belongs to the class I-like SAM-binding methyltransferase superfamily. TrmB family.

It catalyses the reaction guanosine(46) in tRNA + S-adenosyl-L-methionine = N(7)-methylguanosine(46) in tRNA + S-adenosyl-L-homocysteine. Its pathway is tRNA modification; N(7)-methylguanine-tRNA biosynthesis. Its function is as follows. Catalyzes the formation of N(7)-methylguanine at position 46 (m7G46) in tRNA. This chain is tRNA (guanine-N(7)-)-methyltransferase, found in Ruegeria pomeroyi (strain ATCC 700808 / DSM 15171 / DSS-3) (Silicibacter pomeroyi).